We begin with the raw amino-acid sequence, 67 residues long: Conotoxin AbVIO (67 aa).

A signal peptide spans 1 to 17 (VIIIAVLFLTACQLIAT). A propeptide spanning residues 18 to 40 (ASYARSERKHPDLRLSSRNSKLS) is cleaved from the precursor. Disulfide bonds link Cys43/Cys57, Cys50/Cys61, and Cys56/Cys66.

This sequence belongs to the conotoxin O1 superfamily. As to expression, expressed by the venom duct.

The protein localises to the secreted. The protein is Conotoxin AbVIO of Conus abbreviatus (Abbreviated cone).